Here is a 104-residue protein sequence, read N- to C-terminus: ATP-dependent Clp protease adapter protein ClpS (104 aa).

The protein belongs to the ClpS family. Binds to the N-terminal domain of the chaperone ClpA.

In terms of biological role, involved in the modulation of the specificity of the ClpAP-mediated ATP-dependent protein degradation. The polypeptide is ATP-dependent Clp protease adapter protein ClpS (Hydrogenovibrio crunogenus (strain DSM 25203 / XCL-2) (Thiomicrospira crunogena)).